The following is a 245-amino-acid chain: Bis(5'-nucleosyl)-tetraphosphatase PrpE [asymmetrical] (245 aa).

This sequence belongs to the PrpE family. Ni(2+) serves as cofactor.

The enzyme catalyses P(1),P(4)-bis(5'-guanosyl) tetraphosphate + H2O = GMP + GTP + 2 H(+). Functionally, asymmetrically hydrolyzes Ap4p to yield AMP and ATP. This Anoxybacillus flavithermus (strain DSM 21510 / WK1) protein is Bis(5'-nucleosyl)-tetraphosphatase PrpE [asymmetrical].